We begin with the raw amino-acid sequence, 509 residues long: NAD-dependent histone deacetylase SIR2 (509 aa).

The disordered stretch occupies residues 1-35; that stretch reads MIISRGSHVDEEPVAKKPRISVGEMTDDTTDDGLN. A compositionally biased stretch (acidic residues) spans 25–35; sequence MTDDTTDDGLN. In terms of domain architecture, Deacetylase sirtuin-type spans 185–476; that stretch reads RLSNFYTIDH…TVVAQKCEWD (292 aa). NAD(+) contacts are provided by residues 210–229 and 292–295; these read GAGVSTSLGIPDFRSSEGFY and QNID. H312 functions as the Proton acceptor in the catalytic mechanism. Residues C320, C323, C344, and C347 each contribute to the Zn(2+) site. Residues 420 to 422, 445 to 447, and C462 contribute to the NAD(+) site; these read GTS and NKD.

It belongs to the sirtuin family. Class I subfamily. Zn(2+) serves as cofactor.

It localises to the nucleus. It catalyses the reaction N(6)-acetyl-L-lysyl-[protein] + NAD(+) + H2O = 2''-O-acetyl-ADP-D-ribose + nicotinamide + L-lysyl-[protein]. Its function is as follows. NAD-dependent deacetylase. Heterochromatin component that silences transcription at silent mating loci, telomeres and the ribosomal DNA, and that also suppresses recombination in the rDNA and extends replicative life span. It acts as a NAD-dependent histone deacetylase, which deacetylates 'Lys-9' and 'Lys-14' of Histone H3 and 'Lys-16' of Histone H4. The sequence is that of NAD-dependent histone deacetylase SIR2 (SIR2) from Candida glabrata (strain ATCC 2001 / BCRC 20586 / JCM 3761 / NBRC 0622 / NRRL Y-65 / CBS 138) (Yeast).